Here is a 569-residue protein sequence, read N- to C-terminus: GATOR1 complex protein NPRL3 (569 aa).

2 disordered regions span residues 27–60 (PFQRSQEHPASQTNKPRSRYAVNNTGEHADDQDG) and 441–476 (TPNALSFGSPTSSDDMTLTSPSMDNSSAELLPSGDS). Composition is skewed to polar residues over residues 34-52 (HPASQTNKPRSRYAVNNTG) and 441-468 (TPNALSFGSPTSSDDMTLTSPSMDNSSA). Residue S476 is modified to Phosphoserine.

The protein belongs to the NPR3 family. In terms of assembly, within the GATOR complex, component of the GATOR1 subcomplex, made of DEPDC5, NPRL2 and NPRL3. GATOR1 mediates the strong interaction of the GATOR complex with small GTPases Rag (RagA/RRAGA, RagB/RRAGB, RagC/RRAGC and/or RagD/RRAGD) heterodimers. GATOR1 interacts with GPR155/LYCHOS; interaction takes place in presence of cholesterol and prevents interaction between GATOR1 and KICSTOR.

The protein resides in the lysosome membrane. As a component of the GATOR1 complex functions as an inhibitor of the amino acid-sensing branch of the mTORC1 pathway. In response to amino acid depletion, the GATOR1 complex has GTPase activating protein (GAP) activity and strongly increases GTP hydrolysis by RagA/RRAGA (or RagB/RRAGB) within heterodimeric Rag complexes, thereby turning them into their inactive GDP-bound form, releasing mTORC1 from lysosomal surface and inhibiting mTORC1 signaling. In the presence of abundant amino acids, the GATOR1 complex is negatively regulated by GATOR2, the other GATOR subcomplex, in this amino acid-sensing branch of the TORC1 pathway. This Mus musculus (Mouse) protein is GATOR1 complex protein NPRL3.